An 89-amino-acid chain; its full sequence is Rho beta-crystallin (89 aa).

Position 31 (histidine 31) interacts with substrate.

Belongs to the aldo/keto reductase family. Monomer.

The sequence is that of Rho beta-crystallin from Lepidodactylus lugubris (Mourning gecko).